The chain runs to 271 residues: Proteasome inhibitor PI31 subunit (271 aa).

Position 2 is an N-acetylalanine (A2). The tract at residues A2–N150 is important for homodimerization and interaction with FBXO7. Position 153 is a phosphoserine (S153). The residue at position 205 (R205) is an Omega-N-methylarginine. R219 is subject to Asymmetric dimethylarginine. Residues I222–L271 form a disordered region. Residue R231 is modified to Omega-N-methylarginine. Residues T251 to G265 show a composition bias toward pro residues. S252 bears the Phosphoserine mark.

It belongs to the proteasome inhibitor PI31 family. As to quaternary structure, monomer and homodimer. Interacts with FBXO7. Interacts with the 20S proteasome.

Its subcellular location is the cytoplasm. It localises to the endoplasmic reticulum. Functionally, plays an important role in control of proteasome function. Inhibits the hydrolysis of protein and peptide substrates by the 20S proteasome. Also inhibits the activation of the proteasome by the proteasome regulatory proteins PA700 and PA28. In Homo sapiens (Human), this protein is Proteasome inhibitor PI31 subunit (PSMF1).